We begin with the raw amino-acid sequence, 173 residues long: uncharacterized protein (173 aa).

A run of 3 helical transmembrane segments spans residues 24 to 44 (VAFI…WLFF), 82 to 102 (YILF…SYFI), and 135 to 155 (LIKR…ILFS).

It is found in the cell membrane. This is an uncharacterized protein from Rickettsia prowazekii (strain Madrid E).